Consider the following 812-residue polypeptide: cAMP-regulated phosphoprotein 21 (812 aa).

The tract at residues 1–130 is disordered; it reads MSEQGDLNQA…KDKTSEKPKI (130 aa). The residue at position 2 (Ser2) is an N-acetylserine. The segment covering 9–25 has biased composition (low complexity); it reads QAIAEEGGTEQETATPE. The stretch at 32-58 forms a coiled coil; that stretch reads ESLDEEEKLELQRRLEAQNQERRKSKS. Ser33 is subject to Phosphoserine. Basic and acidic residues predominate over residues 40 to 53; sequence LELQRRLEAQNQER. Ser56 is modified (phosphoserine). A compositionally biased stretch (low complexity) spans 90-100; that stretch reads IHLQLSSFSSL. A compositionally biased stretch (basic and acidic residues) spans 102 to 130; the sequence is EEDKSRKDDSEREKEKDKNKDKTSEKPKI. Ser134 is modified (phosphoserine). Residues 164–227 form the R3H domain; sequence RMILLKMEQE…SVIINKTSST (64 aa). One can recognise an SUZ domain in the interval 228–300; sequence RIPEQRFCEH…VRERIFAHDS (73 aa). The tract at residues 246–281 is disordered; it reads SQKRFILKRDNSSIDKEDNQQNRMHPFRDDRRSKSI. The residue at position 300 (Ser300) is a Phosphoserine. 3 disordered regions span residues 332–436, 485–544, and 561–632; these read RGNR…PLVS, HTGQ…MAGP, and LSRQ…QQPP. Over residues 339–349 the composition is skewed to low complexity; sequence GRTSGSRQSSS. Basic and acidic residues predominate over residues 351–360; the sequence is NELKWSDHQR. The span at 361–373 shows a compositional bias: polar residues; that stretch reads AWSSTDSDSSNRN. 2 positions are modified to phosphoserine: Ser363 and Ser383. A compositionally biased stretch (low complexity) spans 391-423; the sequence is TRGDSTSSTRSTGKLSKAGSESSSSAGSSGSLS. Ser562 carries the phosphoserine modification. Residues 582 to 602 are compositionally biased toward polar residues; it reads LMPQPAQQPSYVIASTGQQLP. Positions 619–632 are enriched in pro residues; that stretch reads QPPPSPQGFVQQPP. Arg655 carries the post-translational modification Asymmetric dimethylarginine.

Interacts with CALM1. In terms of processing, phosphorylation at Ser-56 favors interaction with CALM1. Isoform 1 is methylated by CARM1 at Arg-655 in immature thymocytes. As to expression, isoform 2 is expressed in brain. Isoform 1 is present in immature thymocytes (at protein level).

Its subcellular location is the cytoplasm. Isoform 2 may act as a competitive inhibitor of calmodulin-dependent enzymes such as calcineurin in neurons. The sequence is that of cAMP-regulated phosphoprotein 21 (ARPP21) from Homo sapiens (Human).